A 729-amino-acid polypeptide reads, in one-letter code: DNA topoisomerase 3 (729 aa).

Residues 3–136 (KSVVIAEKPS…IKRLWISSVT (134 aa)) enclose the Toprim domain. The Mg(2+) site is built by Glu9 and Asp105. The 442-residue stretch at 153–594 (YDNLYASAVA…EMKNYTKEIV (442 aa)) folds into the Topo IA-type catalytic domain. Residues 187 to 192 (NCGRVQ) are interaction with DNA. Residue Tyr310 is the O-(5'-phospho-DNA)-tyrosine intermediate of the active site. Residues 686-713 (ERRKKESGNKADKRDVQKYMKQQNKEEE) show a composition bias toward basic and acidic residues. Positions 686-719 (ERRKKESGNKADKRDVQKYMKQQNKEEEPLNNPF) are disordered.

Belongs to the type IA topoisomerase family. Mg(2+) serves as cofactor.

The enzyme catalyses ATP-independent breakage of single-stranded DNA, followed by passage and rejoining.. Its function is as follows. Releases the supercoiling and torsional tension of DNA, which is introduced during the DNA replication and transcription, by transiently cleaving and rejoining one strand of the DNA duplex. Introduces a single-strand break via transesterification at a target site in duplex DNA. The scissile phosphodiester is attacked by the catalytic tyrosine of the enzyme, resulting in the formation of a DNA-(5'-phosphotyrosyl)-enzyme intermediate and the expulsion of a 3'-OH DNA strand. The free DNA strand then undergoes passage around the unbroken strand, thus removing DNA supercoils. Finally, in the religation step, the DNA 3'-OH attacks the covalent intermediate to expel the active-site tyrosine and restore the DNA phosphodiester backbone. The chain is DNA topoisomerase 3 from Bacillus cereus (strain ATCC 14579 / DSM 31 / CCUG 7414 / JCM 2152 / NBRC 15305 / NCIMB 9373 / NCTC 2599 / NRRL B-3711).